Here is a 430-residue protein sequence, read N- to C-terminus: C-terminal-binding protein 1 (430 aa).

Positions 1–59 (MSGVRPPIMNGPMHPRPLVALLDGRDCTVEMPILKDVATVAFCDAQSTQEIHEKVLNEA) are interaction with GLIS2 1. Residues serine 89, 169-174 (IGLGRV), aspartate 193, 226-232 (CGLNEHN), 253-255 (TAR), and aspartate 279 contribute to the NAD(+) site. The active site involves arginine 255. Residues 277-349 (ALDVHESEPF…VNKDHLTAAT (73 aa)) form an interaction with GLIS2 2 region. The active site involves glutamate 284. Serine 289 is subject to Phosphoserine. The active-site Proton donor is the histidine 304. Positions 398–430 (SHGLPPVAHPPHAPSPGQTVKPEADRDHTTDQL) are disordered. Residue serine 412 is modified to Phosphoserine. Residue lysine 418 forms a Glycyl lysine isopeptide (Lys-Gly) (interchain with G-Cter in SUMO) linkage. Residues 419 to 430 (PEADRDHTTDQL) are compositionally biased toward basic and acidic residues.

Belongs to the D-isomer specific 2-hydroxyacid dehydrogenase family. In terms of assembly, homo- or heterodimer. Heterodimer with CTBP2. Interacts with ELK3 (via its PXDLS motif). Interacts with RBBP8 (via its PXDLS motif); the interaction is disrupted by binding to adenovirus E1A. Interacts with PNN, MECOM and ZFHX1B. Interacts with ZNF366 (via PXDLS motif). Interaction with SATB1 (non-acetylated form); the interaction stabilizes its attachment to DNA and promotes transcription repression. Interacts with PRDM16; the interaction represses white adipose tissue (WAT)-specific genes expression. Interacts with GLIS2, HIPK2, FOXP1, FOXP2, HDAC4, HDAC5, HDAC9, NRIP1 and WIZ. Interacts with ZNF217. Interacts with BCL6; the interaction is required for BCL6 transcriptional autoinhibition and inhibition of some BCL6 target genes. Interacts with IKZF4. Interacts with MCRIP1 (unphosphorylated form, via the PXDLS motif); competitively inhibiting CTBP-ZEB1 interaction. Interacts with Bassoon/BSN; this interaction targets and anchors CTBP1 to presynapses. Interacts with SIMC1. NAD(+) serves as cofactor. Post-translationally, the level of phosphorylation appears to be regulated during the cell cycle. Phosphorylation by HIPK2 on Ser-412 induces proteasomal degradation. ADP-ribosylated; when cells are exposed to brefeldin A. In terms of processing, sumoylation on Lys-418 is promoted by the E3 SUMO-protein ligase CBX4.

Its subcellular location is the cytoplasm. The protein localises to the nucleus. It is found in the synapse. The protein resides in the synaptosome. Corepressor targeting diverse transcription regulators such as GLIS2 or BCL6. Has dehydrogenase activity. Involved in controlling the equilibrium between tubular and stacked structures in the Golgi complex. Functions in brown adipose tissue (BAT) differentiation. The chain is C-terminal-binding protein 1 (Ctbp1) from Rattus norvegicus (Rat).